The sequence spans 201 residues: Ribosome maturation factor RimP (201 aa).

Belongs to the RimP family.

The protein resides in the cytoplasm. Required for maturation of 30S ribosomal subunits. The polypeptide is Ribosome maturation factor RimP (Acidiphilium cryptum (strain JF-5)).